Consider the following 544-residue polypeptide: Chaperonin GroEL (544 aa).

Residues 30–33 (TLGP), Lys51, 87–91 (DGTTT), Gly415, 479–481 (NAA), and Asp495 contribute to the ATP site.

The protein belongs to the chaperonin (HSP60) family. As to quaternary structure, forms a cylinder of 14 subunits composed of two heptameric rings stacked back-to-back. Interacts with the co-chaperonin GroES.

The protein localises to the cytoplasm. It carries out the reaction ATP + H2O + a folded polypeptide = ADP + phosphate + an unfolded polypeptide.. Together with its co-chaperonin GroES, plays an essential role in assisting protein folding. The GroEL-GroES system forms a nano-cage that allows encapsulation of the non-native substrate proteins and provides a physical environment optimized to promote and accelerate protein folding. In Francisella tularensis subsp. tularensis (strain SCHU S4 / Schu 4), this protein is Chaperonin GroEL.